We begin with the raw amino-acid sequence, 401 residues long: Phosphoglycerate kinase (401 aa).

Substrate contacts are provided by residues 23 to 25 (DLN), R38, 61 to 64 (HFGR), R120, and R153. ATP is bound by residues K203, E325, and 355 to 358 (GGDT).

It belongs to the phosphoglycerate kinase family. In terms of assembly, monomer.

The protein localises to the cytoplasm. It carries out the reaction (2R)-3-phosphoglycerate + ATP = (2R)-3-phospho-glyceroyl phosphate + ADP. Its pathway is carbohydrate degradation; glycolysis; pyruvate from D-glyceraldehyde 3-phosphate: step 2/5. The polypeptide is Phosphoglycerate kinase (Rhizobium johnstonii (strain DSM 114642 / LMG 32736 / 3841) (Rhizobium leguminosarum bv. viciae)).